The sequence spans 194 residues: Transposon Tn2501 resolvase (194 aa).

The Resolvase/invertase-type recombinase catalytic domain occupies arginine 3–glycine 143. The active-site O-(5'-phospho-DNA)-serine intermediate is the serine 11. The H-T-H motif DNA-binding region spans isoleucine 170–alanine 189.

It belongs to the site-specific recombinase resolvase family.

Resolvase catalyzes the resolution (a site-specific recombination) of the cointegrated replicon to yield the final transposition products. This Escherichia coli protein is Transposon Tn2501 resolvase (tnpR).